The sequence spans 1246 residues: HMG2-induced ER-remodeling protein 1 (1246 aa).

3 disordered regions span residues 19-241 (KGKR…GSLT), 263-288 (HHIQ…LPPI), and 816-836 (MPDA…KDEK). Over residues 27–41 (KSAASTRTSEATTTS) the composition is skewed to low complexity. Residues 58–95 (TIASPQRPLSGQNVNNELSNSKPAVSAEKVSQQGQVPT) show a composition bias toward polar residues. A Phosphoserine modification is found at S102. T128 is modified (phosphothreonine). Composition is skewed to low complexity over residues 154–163 (RSSSISTSLN) and 211–230 (SKIS…PSSS). Positions 271–282 (SGREQDSPHSES) are enriched in basic and acidic residues. S277 carries the phosphoserine modification. S1013 is subject to Phosphoserine. Polar residues-rich tracts occupy residues 1109–1133 (SSRH…TPDS) and 1200–1215 (SRSP…QQKA). Disordered stretches follow at residues 1109 to 1157 (SSRH…LPKI) and 1192 to 1224 (SLYG…LVED). T1130 bears the Phosphothreonine mark. Phosphoserine occurs at positions 1200, 1204, and 1207.

Belongs to the GIP3/HER1 family. May interact with ribosomes.

The protein localises to the cytoplasm. In terms of biological role, required for HMG2-induced endoplasmic reticulum-remodeling. In Saccharomyces cerevisiae (strain ATCC 204508 / S288c) (Baker's yeast), this protein is HMG2-induced ER-remodeling protein 1 (HER1).